The sequence spans 1126 residues: MPKRTDIKSVMVIGSGPIVIGQAAEFDYSGTQACRVLREEGIRVILVNSNPATIMTDPEMADATYIEPISTPILEQIIAKERPDALLPTLGGQTALNAAMALGEAGVLKKYNVELIGASLDAIDRGEDRELFKKVVEEAGAESARSDIAHSLEEVDKIAEKFGYPLVVRPSFTMGGLGSGIAHDEDELHRIAGAGIHYSPTDHVLIEESIEGWKEYELELMRDKKDNVLVVCPIQNVDPVGVHTGDSITVAPVFTLTDREYQKLRDIGIAIIRGVGVDTGGCNIQFAVNPDTGRIIVIEMNPRVSRSSALASKATGFPIAKIATKLALGYTLDEIQNDITQSTPASFEPTIDYVVTKVPRFAFEKFPGADPTLTTSMKSVGEAMALAGNFQESLGKAMRSIDKRHMGFNWDGDKPSEDEVSQLLDAIKVPTEHRYLQIQRALWGGATEEQIFAATKIDPWFIRQFALINETALEVKNAEKLTRKLLKKAKLAGLSDLQIAHLRRLGDEGENTIRELRWSYDLRPVFKTVDTCAAEFDAATPYYYSCYADETELRPRDREAVIILGSGPNRIGQGIEFDYTCVHAVQELGKNYDTIMVNCNPETVSTDYDMSDRLYFEPLTFEDVLEIYEAEKKMGPIKGVIVQLGGQTPLSLAARLKAAGVPILGTTPESIDLAENRELFGEVLKKADMNAPRYGTALSLDEAREAAHAIGYPVLVRPSYVLGGRGMEIVYDDAQLRKYVDRALKEAQADTVVSGRLPSPLLIDKFLQDAVEIDVDALFDGEELYIGGIMEHVEEAGVHSGDAACTLPPSTLSDDQIRRLREGTYAIAKGCGVQGLINVQYAFMANTLYVIEANPRASRTVPFASKATGVALAKAAARIMVGETIQQQRDNGLLLPHGDGGDIHRGQQVAVKESVLPFKRFRTPLGKTVDVLLGPEMRSTGEVMGFDRDFPHAFAKSQLAAYEGGLPTSGNVFISVNDTDKRQLPLFAARLVELGFNIWATEGTASVLRRYGIDSKIVDKISVRMDSDPDDPITTYHAEGSVGKNVVQLIEEGAIDLILNTPNSRGSRSDGYAIRSAAIAADLPQFTTMTEFSAVLMAIEAVRNNDYQIMSIQDHSTQLFELESRD.

A carboxyphosphate synthetic domain region spans residues 1-402 (MPKRTDIKSV…SLGKAMRSID (402 aa)). Arg-129, Arg-169, Gly-175, Gly-176, Glu-208, Ile-210, Glu-215, Gly-241, Val-242, His-243, Gln-285, and Glu-299 together coordinate ATP. One can recognise an ATP-grasp 1 domain in the interval 133-328 (KKVVEEAGAE…IAKIATKLAL (196 aa)). Mg(2+) is bound by residues Gln-285, Glu-299, and Asn-301. Residues Gln-285, Glu-299, and Asn-301 each contribute to the Mn(2+) site. The segment at 403-551 (KRHMGFNWDG…YYYSCYADET (149 aa)) is oligomerization domain. The segment at 552–962 (ELRPRDREAV…AFAKSQLAAY (411 aa)) is carbamoyl phosphate synthetic domain. The region spanning 681–881 (GEVLKKADMN…LAKAAARIMV (201 aa)) is the ATP-grasp 2 domain. Residues Arg-717, Lys-765, Leu-767, Glu-772, Gly-797, Val-798, His-799, Ser-800, Gln-840, and Glu-852 each coordinate ATP. Residues Gln-840, Glu-852, and Asn-854 each coordinate Mg(2+). Mn(2+)-binding residues include Gln-840, Glu-852, and Asn-854. An allosteric domain region spans residues 963-1126 (EGGLPTSGNV…TQLFELESRD (164 aa)). The region spanning 964–1126 (GGLPTSGNVF…TQLFELESRD (163 aa)) is the MGS-like domain.

It belongs to the CarB family. As to quaternary structure, composed of two chains; the small (or glutamine) chain promotes the hydrolysis of glutamine to ammonia, which is used by the large (or ammonia) chain to synthesize carbamoyl phosphate. Tetramer of heterodimers (alpha,beta)4. The cofactor is Mg(2+). Mn(2+) serves as cofactor.

It catalyses the reaction hydrogencarbonate + L-glutamine + 2 ATP + H2O = carbamoyl phosphate + L-glutamate + 2 ADP + phosphate + 2 H(+). The enzyme catalyses hydrogencarbonate + NH4(+) + 2 ATP = carbamoyl phosphate + 2 ADP + phosphate + 2 H(+). The protein operates within amino-acid biosynthesis; L-arginine biosynthesis; carbamoyl phosphate from bicarbonate: step 1/1. Its pathway is pyrimidine metabolism; UMP biosynthesis via de novo pathway; (S)-dihydroorotate from bicarbonate: step 1/3. Its function is as follows. Large subunit of the glutamine-dependent carbamoyl phosphate synthetase (CPSase). CPSase catalyzes the formation of carbamoyl phosphate from the ammonia moiety of glutamine, carbonate, and phosphate donated by ATP, constituting the first step of 2 biosynthetic pathways, one leading to arginine and/or urea and the other to pyrimidine nucleotides. The large subunit (synthetase) binds the substrates ammonia (free or transferred from glutamine from the small subunit), hydrogencarbonate and ATP and carries out an ATP-coupled ligase reaction, activating hydrogencarbonate by forming carboxy phosphate which reacts with ammonia to form carbamoyl phosphate. The sequence is that of Carbamoyl phosphate synthase large chain from Bifidobacterium adolescentis (strain ATCC 15703 / DSM 20083 / NCTC 11814 / E194a).